Consider the following 210-residue polypeptide: Orotate phosphoribosyltransferase (210 aa).

5-phospho-alpha-D-ribose 1-diphosphate is bound by residues R96, K100, H102, and 122–130; that span reads EDLISTGGS. Residue S126 coordinates orotate.

This sequence belongs to the purine/pyrimidine phosphoribosyltransferase family. PyrE subfamily. In terms of assembly, homodimer. Requires Mg(2+) as cofactor.

It carries out the reaction orotidine 5'-phosphate + diphosphate = orotate + 5-phospho-alpha-D-ribose 1-diphosphate. It participates in pyrimidine metabolism; UMP biosynthesis via de novo pathway; UMP from orotate: step 1/2. Catalyzes the transfer of a ribosyl phosphate group from 5-phosphoribose 1-diphosphate to orotate, leading to the formation of orotidine monophosphate (OMP). The chain is Orotate phosphoribosyltransferase (pyrE) from Streptococcus pneumoniae serotype 19F (strain G54).